A 201-amino-acid chain; its full sequence is Ribonuclease HII (201 aa).

The 190-residue stretch at 12–201 (DLVAGVDEVG…VRELLDVSVQ (190 aa)) folds into the RNase H type-2 domain. A divalent metal cation-binding residues include Asp18, Glu19, and Asp110.

This sequence belongs to the RNase HII family. Mn(2+) is required as a cofactor. It depends on Mg(2+) as a cofactor.

The protein localises to the cytoplasm. The catalysed reaction is Endonucleolytic cleavage to 5'-phosphomonoester.. Endonuclease that specifically degrades the RNA of RNA-DNA hybrids. This is Ribonuclease HII from Pseudomonas aeruginosa (strain ATCC 15692 / DSM 22644 / CIP 104116 / JCM 14847 / LMG 12228 / 1C / PRS 101 / PAO1).